An 837-amino-acid polypeptide reads, in one-letter code: Tuftelin-interacting protein 11 (837 aa).

The segment covering 1 to 13 (MSLSHLYRDGEGH) has biased composition (basic and acidic residues). Disordered regions lie at residues 1 to 31 (MSLS…DWDL), 54 to 73 (WAER…RARD), and 85 to 133 (LKKG…KGFA). Positions 1–50 (MSLSHLYRDGEGHMDDDDDERENFEITDWDLQNEFNPNRQRHWQTKEEAT) are required for interaction with DHX15. Position 2 is a phosphoserine (Ser2). Residues 14 to 28 (MDDDDDERENFEITD) are compositionally biased toward acidic residues. Residues 54–64 (WAERDSDEERP) are compositionally biased toward basic and acidic residues. Phosphoserine occurs at positions 59 and 98. Acidic residues predominate over residues 91-102 (EEAELEDSEDEE). Residues 103 to 116 (KPVKQDDFPKDFGP) are compositionally biased toward basic and acidic residues. Ser144 is modified (phosphoserine). Residues 149–195 (TKGIGQKLLQKMGYVPGRGLGKNAQGIINPIEAKQRKGKGAVGAYGS) enclose the G-patch domain. 2 disordered regions span residues 183-236 (QRKG…KKKP) and 289-312 (HNVP…EAKA). Residue Ser210 is modified to Phosphoserine. Residues 217–231 (EFQKELSQWRKDPSG) show a composition bias toward basic and acidic residues. The Nuclear localization signal motif lies at 700–705 (VKDKFN). Positions 710-734 (IMNRAVSSNVGAYMQPGARENIAYL) are required for nuclear speckle localization.

It belongs to the TFP11/STIP family. Identified in the spliceosome C complex. Found in the Intron Large (IL) complex, a post-mRNA release spliceosomal complex containing the excised intron, U2, U5 and U6 snRNPs, and splicing factors. Interacts with TUFT1. Interacts with DHX15; indicative for a recruitment of DHX15 to the IL complex. Interacts with GCFC2.

Its subcellular location is the cytoplasm. The protein resides in the nucleus. Its function is as follows. Involved in pre-mRNA splicing, specifically in spliceosome disassembly during late-stage splicing events. Intron turnover seems to proceed through reactions in two lariat-intron associated complexes termed Intron Large (IL) and Intron Small (IS). In cooperation with DHX15 seems to mediate the transition of the U2, U5 and U6 snRNP-containing IL complex to the snRNP-free IS complex leading to efficient debranching and turnover of excised introns. May play a role in the differentiation of ameloblasts and odontoblasts or in the forming of the enamel extracellular matrix. In Canis lupus familiaris (Dog), this protein is Tuftelin-interacting protein 11 (TFIP11).